A 521-amino-acid polypeptide reads, in one-letter code: Interleukin-9 receptor (521 aa).

An N-terminal signal peptide occupies residues 1–40 (MGLGRCIWEGWTLESEALRRDMGTWLLACICICTCVCLGV). Over 41-270 (SVTGEGQGPR…GPLIPPWGWP (230 aa)) the chain is Extracellular. N-linked (GlcNAc...) asparagine glycans are attached at residues Asn-117 and Asn-156. Residues 149–259 (PPSDLQSNIS…QPVCFQAPQR (111 aa)) enclose the Fibronectin type-III domain. Positions 245 to 249 (WSEWS) match the WSXWS motif motif. Residues 271 to 291 (GNTLVAVSIFLLLTGPTYLLF) traverse the membrane as a helical segment. Over 292–521 (KLSPRVKRIF…VLSKARSWTF (230 aa)) the chain is Cytoplasmic. The Box 1 motif motif lies at 301–309 (FYQNVPSPA). The tract at residues 413 to 439 (WAPTSLTRPAPPDSEGSRSSSSSSSSN) is disordered. The span at 429–439 (SRSSSSSSSSN) shows a compositional bias: low complexity.

Belongs to the type I cytokine receptor family. Type 4 subfamily. As to quaternary structure, interacts with IL9.

It is found in the cell membrane. Its subcellular location is the secreted. Plays an important role in the immune response against parasites by acting as a receptor of IL9. This Homo sapiens (Human) protein is Interleukin-9 receptor (IL9R).